Reading from the N-terminus, the 552-residue chain is Probable protein kinase UbiB (552 aa).

The helical transmembrane segment at 22–42 threads the bilayer; sequence LLPANLPLAATLLLLPFKLFP. The Protein kinase domain maps to 118–498; that stretch reads SFNIEPLASA…QQLARQRNRR (381 aa). ATP-binding positions include 124 to 132 and Lys146; that span reads LASASVAQV. The active-site Proton acceptor is the Asp281. The next 2 membrane-spanning stretches (helical) occupy residues 501–521 and 530–550; these read ITLL…GEGI and FGDI…AWLL.

It belongs to the ABC1 family. UbiB subfamily.

It is found in the cell inner membrane. It functions in the pathway cofactor biosynthesis; ubiquinone biosynthesis [regulation]. Is probably a protein kinase regulator of UbiI activity which is involved in aerobic coenzyme Q (ubiquinone) biosynthesis. The polypeptide is Probable protein kinase UbiB (Cellvibrio japonicus (strain Ueda107) (Pseudomonas fluorescens subsp. cellulosa)).